The sequence spans 193 residues: 21 kDa protein (193 aa).

An N-terminal signal peptide occupies residues 1 to 22 (MKLSKSTLVFSALLVILAAASA).

The polypeptide is 21 kDa protein (Daucus carota (Wild carrot)).